Here is a 620-residue protein sequence, read N- to C-terminus: Endoglucanase 10 (620 aa).

The segment at 1–26 (MFGRDPWGGPLEISNADSATDDDRSR) is disordered. The helical; Signal-anchor for type II membrane protein transmembrane segment at 72–92 (IFMWTVGTILGVGLFIGFVMM) threads the bilayer. Asp165 serves as the catalytic Nucleophile. N-linked (GlcNAc...) asparagine glycans are attached at residues Asn216, Asn314, Asn323, Asn344, Asn408, and Asn425. Catalysis depends on residues His513 and Asp561. N-linked (GlcNAc...) asparagine glycosylation occurs at Asn567. Glu570 is a catalytic residue.

This sequence belongs to the glycosyl hydrolase 9 (cellulase E) family. Ubiquitous.

The protein resides in the membrane. It carries out the reaction Endohydrolysis of (1-&gt;4)-beta-D-glucosidic linkages in cellulose, lichenin and cereal beta-D-glucans.. This Oryza sativa subsp. japonica (Rice) protein is Endoglucanase 10 (GLU2).